The chain runs to 1397 residues: Centlein (1397 aa).

2 disordered regions span residues 1–43 (MAAR…GLAG) and 56–76 (LWRGEEGSGGRRGSGRAGAAV). Alanine 2 bears the N-acetylalanine mark. Phosphoserine is present on residues serine 5, serine 9, and serine 22. 2 coiled-coil regions span residues 95 to 126 (EEAKATRSQLLEEELSSLKEELALCQADKEFV) and 405 to 481 (VVNL…KLMA). Disordered stretches follow at residues 422–449 (LKEKLEESQGTAPSLSPHDSDSSHSGKA) and 485–521 (CDQDFSEKGTEGKHKEPPVKRSRSLSPKSSFMGSEEL). The span at 485-503 (CDQDFSEKGTEGKHKEPPV) shows a compositional bias: basic and acidic residues. Coiled-coil stretches lie at residues 674–778 (KNEK…KALR), 973–1114 (ISLR…MELL), and 1152–1299 (SESN…LKKM). Residue serine 1219 is modified to Phosphoserine. Threonine 1334 is modified (phosphothreonine).

In terms of assembly, interacts with CEP250 and CEP68. Interacts with NEK2; the interaction leads to phosphorylation of CNTLN. Phosphorylated directly or indirectly by NEK2.

The protein resides in the cytoplasm. It localises to the cytoskeleton. Its subcellular location is the microtubule organizing center. It is found in the centrosome. The protein localises to the centriole. In terms of biological role, required for centrosome cohesion and recruitment of CEP68 to centrosomes. The protein is Centlein of Mus musculus (Mouse).